The chain runs to 476 residues: Cyclase-associated protein 1 (476 aa).

2 disordered regions span residues 224–262 (KPASAPAKGPPGAPAPPPAPLFSAESSKPSSSSNQKQGM) and 277–319 (GLRK…PPKM). The span at 231–243 (KGPPGAPAPPPAP) shows a compositional bias: pro residues. Residues 246 to 256 (SAESSKPSSSS) are compositionally biased toward low complexity. Over residues 280–293 (KVTDDMKTKNRADR) the composition is skewed to basic and acidic residues. The region spanning 316–453 (PPKMELQMGR…PDGDWVEHAL (138 aa)) is the C-CAP/cofactor C-like domain.

It belongs to the CAP family. In terms of tissue distribution, expressed in roots, cotyledons, leaves, stems, flowers, pollen and shoots. Not detected in siliques.

Functionally, actin monomer binding protein that accelerates the exchange of ADP for ATP. Regulates the pool of unpolymerized ATP-actin. Key intermediate between actin-depolymerizing factor (ADF)-mediated disassembly and the profilin-based nucleation and elongation machinery. In Arabidopsis thaliana (Mouse-ear cress), this protein is Cyclase-associated protein 1 (CAP1).